An 83-amino-acid polypeptide reads, in one-letter code: Putative membrane protein insertion efficiency factor (83 aa).

Belongs to the UPF0161 family.

It localises to the cell inner membrane. Could be involved in insertion of integral membrane proteins into the membrane. The polypeptide is Putative membrane protein insertion efficiency factor (Pelagibacter ubique (strain HTCC1062)).